A 448-amino-acid polypeptide reads, in one-letter code: Homogentisate 1,2-dioxygenase (448 aa).

H303 serves as the catalytic Proton acceptor. H346 and E352 together coordinate Fe cation. Homogentisate is bound by residues Y361 and H382. Position 382 (H382) interacts with Fe cation.

This sequence belongs to the homogentisate dioxygenase family. In terms of assembly, hexamer; dimer of trimers. The cofactor is Fe cation.

It carries out the reaction homogentisate + O2 = 4-maleylacetoacetate + H(+). It functions in the pathway amino-acid degradation; L-phenylalanine degradation; acetoacetate and fumarate from L-phenylalanine: step 4/6. Involved in the catabolism of homogentisate (2,5-dihydroxyphenylacetate or 2,5-OH-PhAc), a central intermediate in the degradation of phenylalanine and tyrosine. Catalyzes the oxidative ring cleavage of the aromatic ring of homogentisate to yield maleylacetoacetate. This Rhodopseudomonas palustris (strain TIE-1) protein is Homogentisate 1,2-dioxygenase.